A 592-amino-acid polypeptide reads, in one-letter code: uncharacterized protein (592 aa).

This is an uncharacterized protein from Saccharolobus solfataricus (strain ATCC 35092 / DSM 1617 / JCM 11322 / P2) (Sulfolobus solfataricus).